We begin with the raw amino-acid sequence, 423 residues long: Gamma-glutamyl phosphate reductase (423 aa).

Low complexity predominate over residues 1–14; sequence MTLQAAPRSAAAQQ. Residues 1–25 are disordered; the sequence is MTLQAAPRSAAAQQREPDLRQEVHD. Residues 15–25 are compositionally biased toward basic and acidic residues; sequence REPDLRQEVHD.

Belongs to the gamma-glutamyl phosphate reductase family.

It localises to the cytoplasm. The catalysed reaction is L-glutamate 5-semialdehyde + phosphate + NADP(+) = L-glutamyl 5-phosphate + NADPH + H(+). It participates in amino-acid biosynthesis; L-proline biosynthesis; L-glutamate 5-semialdehyde from L-glutamate: step 2/2. Catalyzes the NADPH-dependent reduction of L-glutamate 5-phosphate into L-glutamate 5-semialdehyde and phosphate. The product spontaneously undergoes cyclization to form 1-pyrroline-5-carboxylate. The polypeptide is Gamma-glutamyl phosphate reductase (Mycobacterium ulcerans (strain Agy99)).